Reading from the N-terminus, the 407-residue chain is Carbamoyl phosphate synthase small chain (407 aa).

Residues 1–203 (MSQNESGTIA…EPCGEYEGKE (203 aa)) form a CPSase region. L-glutamine-binding residues include Ser-61, Gly-255, and Gly-257. The region spanning 207-405 (TVAAVDLGIK…CELMKNNSKE (199 aa)) is the Glutamine amidotransferase type-1 domain. Cys-283 acts as the Nucleophile in catalysis. Phe-284, Gln-287, Asn-325, Gly-327, and Phe-328 together coordinate L-glutamine. Catalysis depends on residues His-378 and Glu-380.

It belongs to the CarA family. In terms of assembly, composed of two chains; the small (or glutamine) chain promotes the hydrolysis of glutamine to ammonia, which is used by the large (or ammonia) chain to synthesize carbamoyl phosphate. Tetramer of heterodimers (alpha,beta)4.

It catalyses the reaction hydrogencarbonate + L-glutamine + 2 ATP + H2O = carbamoyl phosphate + L-glutamate + 2 ADP + phosphate + 2 H(+). The catalysed reaction is L-glutamine + H2O = L-glutamate + NH4(+). The protein operates within amino-acid biosynthesis; L-arginine biosynthesis; carbamoyl phosphate from bicarbonate: step 1/1. It participates in pyrimidine metabolism; UMP biosynthesis via de novo pathway; (S)-dihydroorotate from bicarbonate: step 1/3. Functionally, small subunit of the glutamine-dependent carbamoyl phosphate synthetase (CPSase). CPSase catalyzes the formation of carbamoyl phosphate from the ammonia moiety of glutamine, carbonate, and phosphate donated by ATP, constituting the first step of 2 biosynthetic pathways, one leading to arginine and/or urea and the other to pyrimidine nucleotides. The small subunit (glutamine amidotransferase) binds and cleaves glutamine to supply the large subunit with the substrate ammonia. The polypeptide is Carbamoyl phosphate synthase small chain (Bifidobacterium longum (strain DJO10A)).